A 1309-amino-acid polypeptide reads, in one-letter code: MEAEKDSGRRLRAIDRQRYDENEDLSDVEEIVSVRGFSLEEKLRSQLYQGDFVHAMEGKDFNYEYVQREALRVPLVFRDKDGLGIKMPDPDFTVRDVKLLVGSRRLVDVMDVNTQKGTEMSMSQFVRYYETPEAQRDKLYNVISLEFSHTKLEHLVKRPTVVDLVDWVDNMWPQHLKEKQTEATNALAEMKYPKVKKYCLMSVKGCFTDFHIDFGGTSVWYHVFRGGKIFWLIPPTLHNLALYEEWVLSGKQSDIFLGDRVERCQRIELKQGYTFFIPSGWIHAVYTPVDSLVFGGNILHSFNVPMQLRIYEIEDRTRVQPKFRYPFYYEMCWYVLERYVYCVTQRSYLTQEYQRELMLIDAPRKTSVDGFSSDSWLDMEEESCEQQPQEEEEEEEDKEEEGDGADKTPKPPTDDPTSPTSTPPEDQDSTGKKPKAPAIRFLKRTLSNESEESVKSTSMPTDDPKTPTGSPATEVSTKWTHLTEFELKGLKALVEKLESLPENKKCVPEGIEDPQALLEGVKNVLKEHVDDDPTLAITGVPVVSWPKKTAKNRVVGRPKGKLGPASAVKLAANRTTAGARRRRTRCRKCEACLRTECGECHFCKDMKKFGGPGRMKQSCIMRQCIAPVLPHTAVCLVCGEAGKEDTVEEEEGKFNLMLMECSICNEIIHPGCLKIKESEGVVNDELPNCWECPKCNHAGKTGKQKRGPGFKYASNLPGSLLKEQKMNRDNKEGQEPAKRRSECEEAPRRRSDEHPKKVPADGILRRKSDDVHLRRKRKYEKPQELSGRKRASSLQTSPGSSSHLSPRPPLGSSLSPWWRSSLTYFQQQLKPGKEDKLFRKKRRSWKNAEDRLSLANKPLRRFKQEPEDDLPEAPPKTRESDQSRSSSPTAGPSTEGAEGPEEKKKVKMRRKRRLVNKELSKELSKELNHEIQKTESTLAHESQQPIKSEPESENDEPKRPLSHCERPHRFSKGLNGTPRELRHSLGPGLRSPPRVMSRPPPSASPPKCIQMERHVIRPPPISPPPDSLPLDDGAAHVMHREVWMAVFSYLSHRDLCVCMRVCRTWNRWCCDKRLWTRIDLNRCKSITPLMLSGIIRRQPVSLDLSWTNISKKQLSWLINRLPGLRDLVLSGCSWIAVSALCSSSCPLLRTLDVQWVEGLKDAQMRDLLSPPTDNRPGQMDNRSKLRNIVELRLAGLDITDVSLRLIIRHMPLLSKLQLSYCNHINDQSINLLTAVGTTTRDSLTEVNLSDCNKVTDLCLSFFKRCGNICHIDLRYCKQVTKEGCEQFIAEMSVSVQFGQVEEKLLQKLS.

At serine 26 the chain carries Phosphoserine. One can recognise a JmjC domain in the interval 147–315 (FSHTKLEHLV…MQLRIYEIED (169 aa)). Substrate is bound at residue threonine 208. Positions 211 and 213 each coordinate Fe cation. Lysine 228 is a binding site for substrate. Residue histidine 283 participates in Fe cation binding. The span at 378-403 (DMEEESCEQQPQEEEEEEEDKEEEGD) shows a compositional bias: acidic residues. A disordered region spans residues 378-476 (DMEEESCEQQ…PTGSPATEVS (99 aa)). The segment covering 404-413 (GADKTPKPPT) has biased composition (basic and acidic residues). A compositionally biased stretch (low complexity) spans 415–424 (DPTSPTSTPP). Residues serine 447 and serine 450 each carry the phosphoserine modification. At threonine 466 the chain carries Phosphothreonine. Over residues 467–476 (PTGSPATEVS) the composition is skewed to polar residues. Serine 470 carries the post-translational modification Phosphoserine. Residues 579–625 (ARRRRTRCRKCEACLRTECGECHFCKDMKKFGGPGRMKQSCIMRQCI) form a CXXC-type zinc finger. Zn(2+)-binding residues include cysteine 586, cysteine 589, cysteine 592, cysteine 597, cysteine 600, cysteine 603, cysteine 619, cysteine 624, cysteine 635, cysteine 638, cysteine 661, cysteine 664, histidine 669, cysteine 672, cysteine 692, and cysteine 695. A PHD-type zinc finger spans residues 632–698 (TAVCLVCGEA…CWECPKCNHA (67 aa)). Disordered stretches follow at residues 700–816 (KTGK…SLSP) and 828–1005 (QLKP…SASP). Basic and acidic residues predominate over residues 722–772 (KEQKMNRDNKEGQEPAKRRSECEEAPRRRSDEHPKKVPADGILRRKSDDVH). Low complexity predominate over residues 792–816 (SSLQTSPGSSSHLSPRPPLGSSLSP). Glycyl lysine isopeptide (Lys-Gly) (interchain with G-Cter in SUMO2) cross-links involve residues lysine 830 and lysine 863. Polar residues predominate over residues 883–892 (SRSSSPTAGP). Over residues 905–914 (KVKMRRKRRL) the composition is skewed to basic residues. Basic and acidic residues predominate over residues 915 to 933 (VNKELSKELSKELNHEIQK). Positions 916–944 (NKELSKELSKELNHEIQKTESTLAHESQQ) form a coiled coil. Serine 924 carries the phosphoserine modification. A compositionally biased stretch (polar residues) spans 934–946 (TESTLAHESQQPI). Serine 948 and serine 952 each carry phosphoserine. Basic and acidic residues predominate over residues 955-968 (DEPKRPLSHCERPH). Residues serine 991 and serine 1004 each carry the phosphoserine modification. An F-box domain is found at 1032–1078 (DGAAHVMHREVWMAVFSYLSHRDLCVCMRVCRTWNRWCCDKRLWTRI). LRR repeat units lie at residues 1106-1127 (WTNI…LRDL), 1129-1155 (LSGC…DVQW), 1195-1220 (GLDI…QLSY), 1221-1250 (CNHI…NLSD), 1251-1275 (CNKV…DLRY), and 1276-1309 (CKQV…QKLS).

It belongs to the JHDM1 histone demethylase family. Interacts with SKP1, forming heterodimers. The KDM2B-SKP1 heterodimeric complex interacts with the PCGF1-BCORL heterodimeric complex to form a homotetrameric polycomb repression complex 1 (PRC1.1). Directly interacts with CUL1. The SKP1-KDM2B interacts with UBB. It depends on Fe(2+) as a cofactor.

Its subcellular location is the nucleus. The protein localises to the nucleolus. It is found in the chromosome. The enzyme catalyses N(6),N(6)-dimethyl-L-lysyl(36)-[histone H3] + 2 2-oxoglutarate + 2 O2 = L-lysyl(36)-[histone H3] + 2 formaldehyde + 2 succinate + 2 CO2. With respect to regulation, histone demethylase activity is inhibited by fumarate. Its function is as follows. Histone demethylase that demethylates 'Lys-4' and 'Lys-36' of histone H3, thereby playing a central role in histone code. Preferentially demethylates trimethylated H3 'Lys-4' and dimethylated H3 'Lys-36' residue while it has weak or no activity for mono- and tri-methylated H3 'Lys-36'. Preferentially binds the transcribed region of ribosomal RNA and represses the transcription of ribosomal RNA genes which inhibits cell growth and proliferation. May also serve as a substrate-recognition component of the SCF (SKP1-CUL1-F-box protein)-type E3 ubiquitin ligase complex. The protein is Lysine-specific demethylase 2B (Kdm2b) of Mus musculus (Mouse).